The chain runs to 95 residues: Alpha-bungarotoxin, isoform A31 (95 aa).

A signal peptide spans 1–21 (MKTLLLTLVVVTIVCLDLGYT). 5 disulfide bridges follow: Cys-24/Cys-44, Cys-37/Cys-65, Cys-50/Cys-54, Cys-69/Cys-80, and Cys-81/Cys-86.

This sequence belongs to the three-finger toxin family. Long-chain subfamily. Type II alpha-neurotoxin sub-subfamily. Monomer in solution, homodimer in crystal state. Expressed by the venom gland.

The protein resides in the secreted. In terms of biological role, binds with high affinity to muscular (tested on Torpedo marmorata, Kd=0.4 nM) and neuronal (tested on chimeric alpha-7/CHRNA7, Kd=0.95 nM) nicotinic acetylcholine receptor (nAChR) and inhibits acetylcholine from binding to the receptor, thereby impairing neuromuscular and neuronal transmission. It also shows an activity on GABA(A) receptors. It antagonises GABA-activated currents with high potency when tested on primary hippocampal neurons. It inhibits recombinantly expressed GABA(A) receptors composed of alpha-2-beta-2-gamma-2 (GABRA2-GABRB2-GABRG2) subunits with high potency (62.3% inhibition at 20 uM of toxin). It also shows a weaker inhibition on GABA(A) receptors composed of alpha-1-beta-2-gamma-2 (GABRA1-GABRB2-GABRG2) subunits, alpha-4-beta-2-gamma-2 (GABRA4-GABRB2-GABRG2) subunits, and alpha-5-beta-2-gamma-2 (GABRA5-GABRB2-GABRG2) subunits. A very weak inhibition is also observed on GABA(A) receptor composed of alpha-1-beta-3-gamma-2 (GABRA1-GABRB3-GABRG2). It has also been shown to bind and inhibit recombinant GABA(A) receptor beta-3/GABRB3 subunit (Kd=about 50 nM). In addition, it blocks the extracellular increase of dopamine evoked by nicotine only at the higher dose (4.2 uM). In vivo, when intraperitoneally injected into mice, induces flaccid paralysis of the limbs and respiratory distress, and causes death in a dose-dependent manner. The protein is Alpha-bungarotoxin, isoform A31 of Bungarus candidus (Malayan krait).